Reading from the N-terminus, the 395-residue chain is MRNIMYFGGTCQSPALPALVRPPAPPLQPSLDIKPFLPFPLDTAAAVNLFPNFNAMDPIQKAVINHTFGVPLPHRRKQIISCNICQLRFNSDSQAAAHYKGTKHAKKLKALEAMKNKQKSVTAKDSAKTTFTSITTNTINTSSDKTDGTAGTPAISTTTTVEIRKSSVMTTEITSKVEKSPTTATGNSSCPSTETEEEKAKRLLYCSLCKVAVNSASQLEAHNSGTKHKTMLEARNGSGTIKAFPRAGVKGKGPVNKGNTGLQNKTFHCEICDVHVNSETQLKQHISSRRHKDRAAGKPPKPKYSPYNKLQKTAHPLGVKLVFSKEPSKPLAPRILPNPLAAAAAAAAVAVSSPFSLRTAPAATLFQTSALPPALLRPAPGPIRTAHTPVLFAPY.

The Matrin-type 1 zinc-finger motif lies at 80-110; the sequence is ISCNICQLRFNSDSQAAAHYKGTKHAKKLKA. The span at 169-193 shows a compositional bias: polar residues; sequence MTTEITSKVEKSPTTATGNSSCPST. The segment at 169–194 is disordered; it reads MTTEITSKVEKSPTTATGNSSCPSTE. 2 consecutive Matrin-type zinc fingers follow at residues 204–234 and 267–297; these read LYCSLCKVAVNSASQLEAHNSGTKHKTMLEA and FHCEICDVHVNSETQLKQHISSRRHKDRAAG. Positions 282–309 are disordered; that stretch reads LKQHISSRRHKDRAAGKPPKPKYSPYNK.

Its subcellular location is the nucleus. In Homo sapiens (Human), this protein is Zinc finger protein 385D (ZNF385D).